The following is a 200-amino-acid chain: uncharacterized protein (200 aa).

In terms of biological role, involved in osmoadaptation. This is an uncharacterized protein from Emericella nidulans (strain FGSC A4 / ATCC 38163 / CBS 112.46 / NRRL 194 / M139) (Aspergillus nidulans).